The primary structure comprises 453 residues: MDEFDPLDAVQQIHVQARHPKNRLLSIAHDAKFVDSVIASYPTFKPVVNERCGTWYVNRRHAPISVYFKSTDGHTGQWSFSCRRLNLHLLNEITTCDGLIIVDSTRRGKRMPDALSKTIPIWIATLNKCVFERLRPHSFPNARLAFLPPFLPDTEKSSILQRLDGFVDSLMQSGIDLDALAAKLTKPIRPLWVTPASRLTSAQFEEYFTVVLVTASAQVQNGYSREHGFLYVQGAADDEEEWSHGLTPEVFWQNTESILTCPEEQLEQKISLLLSSTRNSPTMSNSSLTHLLPTPIFVGDVTGFYPPPENTSYFVLNLSNTTLNVKNELCFPIPSGKKGAPVFRKHFPSILQELNSLDPPFYERDAIFIVDEGNAKEAASCLALMILCLYYDLHMHLLAHPISLSASQSHLTKQTVRQFLVKITELHSKTNPSRAFLLAVNSLLLSANTIATS.

To yeast RIT1.

This is an uncharacterized protein from Schizosaccharomyces pombe (strain 972 / ATCC 24843) (Fission yeast).